Consider the following 393-residue polypeptide: S-adenosylmethionine synthase 2 (393 aa).

Residue Glu-9 participates in Mg(2+) binding. His-15 contacts ATP. K(+) is bound at residue Glu-43. Residues Glu-56 and Gln-99 each contribute to the L-methionine site. ATP-binding positions include Asp-167–Lys-169, Ser-235–Phe-238, Asp-246, Arg-252–Lys-253, Ala-269, Lys-273, and Lys-277. Asp-246 serves as a coordination point for L-methionine. Lys-277 provides a ligand contact to L-methionine.

The protein belongs to the AdoMet synthase family. Homotetramer. It depends on Mn(2+) as a cofactor. Mg(2+) serves as cofactor. Requires Co(2+) as cofactor. K(+) is required as a cofactor.

It is found in the cytoplasm. It catalyses the reaction L-methionine + ATP + H2O = S-adenosyl-L-methionine + phosphate + diphosphate. Its pathway is amino-acid biosynthesis; S-adenosyl-L-methionine biosynthesis; S-adenosyl-L-methionine from L-methionine: step 1/1. In terms of biological role, catalyzes the formation of S-adenosylmethionine from methionine and ATP. The reaction comprises two steps that are both catalyzed by the same enzyme: formation of S-adenosylmethionine (AdoMet) and triphosphate, and subsequent hydrolysis of the triphosphate. This is S-adenosylmethionine synthase 2 (SAMS2) from Elaeagnus umbellata (Autumn olive).